The chain runs to 696 residues: Elongation factor G 2 (696 aa).

Residues 5-281 (SKYRNIGIFA…AVVDYLPSPT (277 aa)) enclose the tr-type G domain. GTP contacts are provided by residues 14–21 (AHVDAGKT), 78–82 (DTPGH), and 132–135 (NKLD).

The protein belongs to the TRAFAC class translation factor GTPase superfamily. Classic translation factor GTPase family. EF-G/EF-2 subfamily.

The protein resides in the cytoplasm. Functionally, catalyzes the GTP-dependent ribosomal translocation step during translation elongation. During this step, the ribosome changes from the pre-translocational (PRE) to the post-translocational (POST) state as the newly formed A-site-bound peptidyl-tRNA and P-site-bound deacylated tRNA move to the P and E sites, respectively. Catalyzes the coordinated movement of the two tRNA molecules, the mRNA and conformational changes in the ribosome. The sequence is that of Elongation factor G 2 from Vibrio parahaemolyticus serotype O3:K6 (strain RIMD 2210633).